We begin with the raw amino-acid sequence, 101 residues long: Small ribosomal subunit protein uS10 (101 aa).

Belongs to the universal ribosomal protein uS10 family. As to quaternary structure, part of the 30S ribosomal subunit.

Involved in the binding of tRNA to the ribosomes. This chain is Small ribosomal subunit protein uS10, found in Phocaeicola vulgatus (strain ATCC 8482 / DSM 1447 / JCM 5826 / CCUG 4940 / NBRC 14291 / NCTC 11154) (Bacteroides vulgatus).